A 531-amino-acid polypeptide reads, in one-letter code: Sterol 26-hydroxylase, mitochondrial (531 aa).

The N-terminal 33 residues, 1–33 (MAALGCARLRWALRGAGRGLCPHGARAKAAIPA), are a transit peptide targeting the mitochondrion. Lys283 carries the post-translational modification N6-acetyllysine. The tract at residues 384 to 398 (PLLKAVLKETLRLYP) is sterol-binding. Residue Cys476 coordinates heme. N6-acetyllysine is present on residues Lys509 and Lys520.

It belongs to the cytochrome P450 family. In terms of assembly, interacts with HSP70; this interaction is required for initial targeting to mitochondria. Heme serves as cofactor. As to expression, expressed in the neural retina and underlying retinal pigment epithelium (at protein level). Expressed in the gray and white matter of cerebellum (at protein level).

It localises to the mitochondrion inner membrane. It catalyses the reaction 5beta-cholestane-3alpha,7alpha,12alpha-triol + 6 reduced [adrenodoxin] + 3 O2 + 5 H(+) = (25R)-3alpha,7alpha,12alpha-trihydroxy-5beta-cholestan-26-oate + 6 oxidized [adrenodoxin] + 4 H2O. The enzyme catalyses cholestanol + 2 reduced [adrenodoxin] + O2 + 2 H(+) = (25R)-26-hydroxycholestanol + 2 oxidized [adrenodoxin] + H2O. The catalysed reaction is (25R)-3beta-hydroxycholest-5-en-7-one-26-al + 2 reduced [adrenodoxin] + O2 + H(+) = (25R)-3beta-hydroxycholest-5-en-7-one-26-oate + 2 oxidized [adrenodoxin] + H2O. It carries out the reaction (25R)-3beta,26-dihydroxycholest-5-en-7-one + 2 reduced [adrenodoxin] + O2 + 2 H(+) = (25R)-3beta-hydroxycholest-5-en-7-one-26-al + 2 oxidized [adrenodoxin] + 2 H2O. It catalyses the reaction 7-oxocholesterol + 2 reduced [adrenodoxin] + O2 + 2 H(+) = (25R)-3beta,26-dihydroxycholest-5-en-7-one + 2 oxidized [adrenodoxin] + H2O. The enzyme catalyses calciol + 2 reduced [adrenodoxin] + O2 + 2 H(+) = calcidiol + 2 oxidized [adrenodoxin] + H2O. The catalysed reaction is (25R)-5beta-cholestane-3alpha,7alpha,12alpha,26-tetrol + 2 reduced [adrenodoxin] + O2 + 2 H(+) = (25R)-3alpha,7alpha,12alpha-trihydroxy-5beta-cholestan-26-al + 2 oxidized [adrenodoxin] + 2 H2O. It carries out the reaction 2 reduced [adrenodoxin] + cholesterol + O2 + 2 H(+) = (25R)-cholest-5-ene-3beta,26-diol + 2 oxidized [adrenodoxin] + H2O. It catalyses the reaction (25R)-3beta,4beta-dihydroxycholest-5-en-26-al + 2 reduced [adrenodoxin] + O2 + H(+) = (25R)-3beta,4beta-dihydroxycholest-5-en-26-oate + 2 oxidized [adrenodoxin] + H2O. The enzyme catalyses (25R)-4beta,26-dihydroxycholesterol + 2 reduced [adrenodoxin] + O2 + 2 H(+) = (25R)-3beta,4beta-dihydroxycholest-5-en-26-al + 2 oxidized [adrenodoxin] + 2 H2O. The catalysed reaction is 4beta-hydroxycholesterol + 2 reduced [adrenodoxin] + O2 + 2 H(+) = (25R)-4beta,26-dihydroxycholesterol + 2 oxidized [adrenodoxin] + H2O. It carries out the reaction (25R)-3beta-hydroxy-5-cholesten-26-al + 2 reduced [adrenodoxin] + O2 + H(+) = (25R)-3beta-hydroxy-5-cholestenoate + 2 oxidized [adrenodoxin] + H2O. It catalyses the reaction (25R)-cholest-5-ene-3beta,26-diol + 2 reduced [adrenodoxin] + O2 + 2 H(+) = (25R)-3beta-hydroxy-5-cholesten-26-al + 2 oxidized [adrenodoxin] + 2 H2O. The enzyme catalyses (25R)-3alpha,7alpha,12alpha-trihydroxy-5beta-cholestan-26-al + 2 reduced [adrenodoxin] + O2 + H(+) = (25R)-3alpha,7alpha,12alpha-trihydroxy-5beta-cholestan-26-oate + 2 oxidized [adrenodoxin] + H2O. The catalysed reaction is 5beta-cholestane-3alpha,7alpha,12alpha-triol + 2 reduced [adrenodoxin] + O2 + 2 H(+) = (25R)-5beta-cholestane-3alpha,7alpha,12alpha,26-tetrol + 2 oxidized [adrenodoxin] + H2O. It functions in the pathway hormone biosynthesis; cholecalciferol biosynthesis. The protein operates within steroid metabolism; cholesterol degradation. It participates in lipid metabolism; bile acid biosynthesis. Cytochrome P450 monooxygenase that catalyzes regio- and stereospecific hydroxylation of cholesterol and its derivatives. Hydroxylates (with R stereochemistry) the terminal methyl group of cholesterol side-chain in a three step reaction to yield at first a C26 alcohol, then a C26 aldehyde and finally a C26 acid. Regulates cholesterol homeostasis by catalyzing the conversion of excess cholesterol to bile acids via both the 'neutral' (classic) and the 'acid' (alternative) pathways. May also regulate cholesterol homeostasis via generation of active oxysterols, which act as ligands for NR1H2 and NR1H3 nuclear receptors, modulating the transcription of genes involved in lipid metabolism. Plays a role in cholestanol metabolism in the cerebellum. Similarly to cholesterol, hydroxylates cholestanol and may facilitate sterol diffusion through the blood-brain barrier to the systemic circulation for further degradation. Also hydroxylates retinal 7-ketocholesterol, a noxious oxysterol with pro-inflammatory and pro-apoptotic effects, and may play a role in its elimination from the retinal pigment epithelium. May play a redundant role in vitamin D biosynthesis. Catalyzes 25-hydroxylation of vitamin D3 that is required for its conversion to a functionally active form. In Homo sapiens (Human), this protein is Sterol 26-hydroxylase, mitochondrial.